A 222-amino-acid polypeptide reads, in one-letter code: Cytolethal distending toxin subunit A (222 aa).

An N-terminal signal peptide occupies residues methionine 1–alanine 15. A lipid anchor (N-palmitoyl cysteine) is attached at cysteine 16. A lipid anchor (S-diacylglycerol cysteine) is attached at cysteine 16. The segment at methionine 22–glutamine 44 is disordered. The mediates binding to target cells stretch occupies residues tryptophan 90–tyrosine 101. Residues histidine 122 to leucine 211 enclose the Ricin B-type lectin domain.

In terms of assembly, heterotrimer of 3 subunits, CdtA, CdtB and CdtC. May form higher oligomers.

It localises to the cell outer membrane. Functionally, CDTs are cytotoxins which induce host cell distension, growth arrest in G2/M phase, nucleus swelling, and chromatin fragmentation in HeLa cells. The protein is Cytolethal distending toxin subunit A (cdtA) of Aggregatibacter actinomycetemcomitans (Actinobacillus actinomycetemcomitans).